A 370-amino-acid polypeptide reads, in one-letter code: 3-dehydroquinate synthase (370 aa).

NAD(+) contacts are provided by residues 108–112 (GVIGD), 132–133 (TT), K145, and K154. The Zn(2+) site is built by E187, H249, and H267.

It belongs to the sugar phosphate cyclases superfamily. Dehydroquinate synthase family. Requires Co(2+) as cofactor. Zn(2+) serves as cofactor. The cofactor is NAD(+).

The protein localises to the cytoplasm. It carries out the reaction 7-phospho-2-dehydro-3-deoxy-D-arabino-heptonate = 3-dehydroquinate + phosphate. The protein operates within metabolic intermediate biosynthesis; chorismate biosynthesis; chorismate from D-erythrose 4-phosphate and phosphoenolpyruvate: step 2/7. Its function is as follows. Catalyzes the conversion of 3-deoxy-D-arabino-heptulosonate 7-phosphate (DAHP) to dehydroquinate (DHQ). The polypeptide is 3-dehydroquinate synthase (Cereibacter sphaeroides (strain ATCC 17025 / ATH 2.4.3) (Rhodobacter sphaeroides)).